The sequence spans 290 residues: Glycine--tRNA ligase alpha subunit (290 aa).

Belongs to the class-II aminoacyl-tRNA synthetase family. Tetramer of two alpha and two beta subunits.

Its subcellular location is the cytoplasm. It carries out the reaction tRNA(Gly) + glycine + ATP = glycyl-tRNA(Gly) + AMP + diphosphate. The sequence is that of Glycine--tRNA ligase alpha subunit from Nitratiruptor sp. (strain SB155-2).